Reading from the N-terminus, the 489-residue chain is Diacylglycerol O-acyltransferase 1 (489 aa).

Residues 1–54 form a disordered region; the sequence is MGDRGGAGGSRRRRTGSRPSIQGGSGPAAAEEEVRDVGAGGDAPVRDTDKDGDV. Residues 1–80 lie on the Cytoplasmic side of the membrane; sequence MGDRGGAGGS…SLFSSDSGFS (80 aa). Positions 1–88 are involved in homomerization; that stretch reads MGDRGGAGGS…FSNYRGILNW (88 aa). S20 bears the Phosphoserine mark. Over residues 44-53 the composition is skewed to basic and acidic residues; that stretch reads PVRDTDKDGD. A helical membrane pass occupies residues 81 to 115; it reads NYRGILNWCVVMLILSNARLFLENLIKYGILVDPI. The Lumenal portion of the chain corresponds to 116 to 127; the sequence is QVVSLFLKDPYS. The interval 116–127 is extracellular loop 1 (EL1); the sequence is QVVSLFLKDPYS. A helical transmembrane segment spans residues 128–153; it reads WPALCLVIVANIFAVAAFQVEKRLAV. Residues 128–489 form an MBOAT fold region; sequence WPALCLVIVA…LNREAPAAGT (362 aa). Residues 154–158 are Cytoplasmic-facing; sequence GALTE. Residues 159–181 form a helical membrane-spanning segment; that stretch reads QAGLLLHGVNLATILCFPAAVAF. Residues 182 to 188 are Lumenal-facing; it reads LLESITP. A helical transmembrane segment spans residues 189-220; that stretch reads VGSVLALMVYTILFLKLFSYRDVNLWCRERRA. At 221–274 the chain is on the cytoplasmic side; it reads GAKAKAALAGKKANGGAAQRTVSYPDNLTYRDLYYFLFAPTLCYELNFPRSPRI. Residues 225–277 form an intracellular loop 1 (IL1) region; the sequence is KAALAGKKANGGAAQRTVSYPDNLTYRDLYYFLFAPTLCYELNFPRSPRIRKR. Residues 275–309 traverse the membrane as a helical segment; that stretch reads RKRFLLRRLLEMLFLTQLQVGLIQQWMVPAIQNSM. At 310–316 the chain is on the lumenal side; sequence KPFKDMD. The chain crosses the membrane as a helical span at residues 317–354; the sequence is YSRIVERLLKLAVPNHLIWLIFFYWLFHSCLNAVAELM. At 355 to 400 the chain is on the cytoplasmic side; it reads QFGDREFYRDWWNSESITYFWQNWNIPVHKWCIRHFYKPMLRRGSS. Positions 355–400 are intracellular loop 2 (IL2); the sequence is QFGDREFYRDWWNSESITYFWQNWNIPVHKWCIRHFYKPMLRRGSS. The FYXDWWN motif signature appears at 361–367; the sequence is FYRDWWN. Residues 375-383, Y391, and R405 each bind an acyl-CoA; that span reads WQNWNIPVH. An amphipathic helix (AH) region spans residues 381 to 395; the sequence is PVHKWCIRHFYKPML. The chain crosses the membrane as a helical span at residues 401 to 421; the sequence is KWAARTAVFLASAFFHEYLVS. H416 is a catalytic residue. Topologically, residues 422 to 429 are lumenal; it reads IPLRMFRL. The chain crosses the membrane as a helical span at residues 430 to 448; the sequence is WAFTGMMAQIPLAWIVGRF. Topologically, residues 449–450 are cytoplasmic; sequence FR. A helical membrane pass occupies residues 451–482; that stretch reads GNYGNAAVWLSLIIGQPVAVLMYVHDYYVLNR. Y478 is a binding site for an acyl-CoA. Residues 483–489 lie on the Lumenal side of the membrane; it reads EAPAAGT.

It belongs to the membrane-bound acyltransferase family. Sterol o-acyltransferase subfamily. Homodimer or homotetramer; both forms have similar enzymatic activities.

Its subcellular location is the endoplasmic reticulum membrane. It carries out the reaction an acyl-CoA + a 1,2-diacyl-sn-glycerol = a triacyl-sn-glycerol + CoA. The enzyme catalyses all-trans-retinol + an acyl-CoA = an all-trans-retinyl ester + CoA. The catalysed reaction is 2-(9Z-octadecenoyl)-glycerol + (9Z)-octadecenoyl-CoA = 1,2-di-(9Z-octadecenoyl)-sn-glycerol + CoA. It catalyses the reaction 1,2-di-(9Z-octadecenoyl)-sn-glycerol + (9Z)-octadecenoyl-CoA = 1,2,3-tri-(9Z-octadecenoyl)-glycerol + CoA. It carries out the reaction all-trans-retinol + hexadecanoyl-CoA = all-trans-retinyl hexadecanoate + CoA. The enzyme catalyses 1-O-(9Z-octadecenyl)-glycerol + (9Z)-octadecenoyl-CoA = 1-O-(9Z-octadecyl)-3-(9Z-octadecenoyl)-glycerol + CoA. The catalysed reaction is 1-O-(9Z-octadecyl)-3-(9Z-octadecenoyl)-glycerol + (9Z)-octadecenoyl-CoA = 1-O-(9Z-octadecenyl)-2,3-di-(9Z-octadecenoyl)glycerol + CoA. It catalyses the reaction 1-(9Z-octadecenoyl)-glycerol + (9Z)-octadecenoyl-CoA = 1,2-di-(9Z-octadecenoyl)-glycerol + CoA. It carries out the reaction 1,2-di-(9Z-octadecenoyl)-glycerol + (9Z)-octadecenoate + H(+) = 1,2,3-tri-(9Z-octadecenoyl)-glycerol + H2O. The enzyme catalyses 1-octadecanoyl-2-(5Z,8Z,11Z,14Z-eicosatetraenoyl)-sn-glycerol + (9Z)-octadecenoyl-CoA = 1-octadecanoyl-2-(5Z,8Z,11Z,14Z)-eicosatetraenoyl-3-(9Z)-octadecenoyl-sn-glycerol + CoA. The catalysed reaction is hexadecane-1,2-diol + 2 hexadecanoyl-CoA = 1,2-O,O-dihexadecanoyl-1,2-hexadecanediol + 2 CoA. It catalyses the reaction hexadecane-1,2-diol + hexadecanoyl-CoA = 2-hydroxyhexadecyl hexadecanoate + CoA. It carries out the reaction 2-(9Z-octadecenoyl)-glycerol + hexadecanoyl-CoA = 1-hexadecanoyl-2-(9Z-octadecenoyl)-sn-glycerol + CoA. The enzyme catalyses 1,2-di-(9Z-octadecenoyl)-sn-glycerol + hexadecanoyl-CoA = 1,2-di-(9Z)-octadecenoyl-3-hexadecanoyl-sn-glycerol + CoA. The catalysed reaction is hexadecan-1-ol + hexadecanoyl-CoA = hexadecanyl hexadecanoate + CoA. It catalyses the reaction 13-cis-retinol + hexadecanoyl-CoA = 13-cis-retinyl hexadecanoate + CoA. It carries out the reaction 1,3-di-(9Z-octadecenoyl)-glycerol + (9Z)-octadecenoyl-CoA = 1,2,3-tri-(9Z-octadecenoyl)-glycerol + CoA. The enzyme catalyses 2,3-di-(9Z)-octadecenoyl-sn-glycerol + (9Z)-octadecenoyl-CoA = 1,2,3-tri-(9Z-octadecenoyl)-glycerol + CoA. The protein operates within lipid metabolism; glycerolipid metabolism. Catalyzes the terminal and only committed step in triacylglycerol synthesis by using diacylglycerol and fatty acyl CoA as substrates. Highly expressed in epithelial cells of the small intestine and its activity is essential for the absorption of dietary fats. In liver, plays a role in esterifying exogenous fatty acids to glycerol, and is required to synthesize fat for storage. Also present in female mammary glands, where it produces fat in the milk. May be involved in VLDL (very low density lipoprotein) assembly. In contrast to DGAT2 it is not essential for survival. Functions as the major acyl-CoA retinol acyltransferase (ARAT) in the skin, where it acts to maintain retinoid homeostasis and prevent retinoid toxicity leading to skin and hair disorders. Exhibits additional acyltransferase activities, includin acyl CoA:monoacylglycerol acyltransferase (MGAT), wax monoester and wax diester synthases. Also able to use 1-monoalkylglycerol (1-MAkG) as an acyl acceptor for the synthesis of monoalkyl-monoacylglycerol (MAMAG). The polypeptide is Diacylglycerol O-acyltransferase 1 (DGAT1) (Bos taurus (Bovine)).